The sequence spans 76 residues: Exodeoxyribonuclease 7 small subunit (76 aa).

Belongs to the XseB family. Heterooligomer composed of large and small subunits.

The protein localises to the cytoplasm. The enzyme catalyses Exonucleolytic cleavage in either 5'- to 3'- or 3'- to 5'-direction to yield nucleoside 5'-phosphates.. Its function is as follows. Bidirectionally degrades single-stranded DNA into large acid-insoluble oligonucleotides, which are then degraded further into small acid-soluble oligonucleotides. This Geobacillus thermodenitrificans (strain NG80-2) protein is Exodeoxyribonuclease 7 small subunit.